A 57-amino-acid polypeptide reads, in one-letter code: Large ribosomal subunit protein bL32 (57 aa).

The protein belongs to the bacterial ribosomal protein bL32 family.

This chain is Large ribosomal subunit protein bL32, found in Halothermothrix orenii (strain H 168 / OCM 544 / DSM 9562).